The sequence spans 256 residues: UPF0259 membrane protein plu2479 (256 aa).

5 consecutive transmembrane segments (helical) span residues 23–43 (TLTL…LFIP), 89–109 (IFSS…LVAA), 132–152 (LFLL…LMLV), 192–212 (LLVP…FIID), and 221–241 (MAGI…LIYL).

Belongs to the UPF0259 family.

The protein resides in the cell inner membrane. This chain is UPF0259 membrane protein plu2479, found in Photorhabdus laumondii subsp. laumondii (strain DSM 15139 / CIP 105565 / TT01) (Photorhabdus luminescens subsp. laumondii).